The primary structure comprises 89 residues: Small ribosomal subunit protein uS17 (89 aa).

The protein belongs to the universal ribosomal protein uS17 family. In terms of assembly, part of the 30S ribosomal subunit.

One of the primary rRNA binding proteins, it binds specifically to the 5'-end of 16S ribosomal RNA. The chain is Small ribosomal subunit protein uS17 from Ralstonia pickettii (strain 12J).